Consider the following 77-residue polypeptide: Acyl carrier protein (77 aa).

Positions 2–77 (SNIEERVKKI…AAIDYVNSAQ (76 aa)) constitute a Carrier domain. Serine 37 is subject to O-(pantetheine 4'-phosphoryl)serine.

This sequence belongs to the acyl carrier protein (ACP) family. Post-translationally, 4'-phosphopantetheine is transferred from CoA to a specific serine of apo-ACP by AcpS. This modification is essential for activity because fatty acids are bound in thioester linkage to the sulfhydryl of the prosthetic group.

The protein resides in the cytoplasm. It participates in lipid metabolism; fatty acid biosynthesis. Its function is as follows. Carrier of the growing fatty acid chain in fatty acid biosynthesis. The polypeptide is Acyl carrier protein (Vibrio campbellii (strain ATCC BAA-1116)).